The following is a 110-amino-acid chain: MVVLKVCLVLLFLVGGTTSANLRLSKLGLLMKSDHQHSNDDESSKPCCDQCACTKSNPPQCRCSDMRLNSCHSACKSCICALSYPAQCFCVDITDFCYEPCKPSEDDKEN.

Positions 1–19 (MVVLKVCLVLLFLVGGTTS) are cleaved as a signal peptide. A propeptide spanning residues 20–39 (ANLRLSKLGLLMKSDHQHSN) is cleaved from the precursor. Intrachain disulfides connect cysteine 47-cysteine 101, cysteine 48-cysteine 63, cysteine 51-cysteine 97, cysteine 53-cysteine 61, cysteine 71-cysteine 78, cysteine 75-cysteine 90, and cysteine 80-cysteine 88.

The protein belongs to the Bowman-Birk serine protease inhibitor family.

Its function is as follows. Inhibitor of trypsin and of chymotrypsin. In Glycine max (Soybean), this protein is Bowman-Birk type proteinase inhibitor.